Here is a 415-residue protein sequence, read N- to C-terminus: Multidrug resistance protein MdtA (415 aa).

The signal sequence occupies residues 1-21 (MKGSYKSRWVIVIVVVIAAIA). 2 disordered regions span residues 32–60 (SRSA…GPLA) and 392–415 (EAQS…GARS). The segment covering 399–415 (PEEKATSREYAKKGARS) has biased composition (basic and acidic residues).

This sequence belongs to the membrane fusion protein (MFP) (TC 8.A.1) family. In terms of assembly, part of a tripartite efflux system composed of MdtA, MdtB and MdtC.

The protein resides in the cell inner membrane. The MdtABC tripartite complex confers resistance against novobiocin and deoxycholate. In Escherichia coli (strain 55989 / EAEC), this protein is Multidrug resistance protein MdtA.